We begin with the raw amino-acid sequence, 874 residues long: Alanine--tRNA ligase (874 aa).

Residues histidine 562, histidine 566, cysteine 664, and histidine 668 each coordinate Zn(2+).

Belongs to the class-II aminoacyl-tRNA synthetase family. It depends on Zn(2+) as a cofactor.

It is found in the cytoplasm. It carries out the reaction tRNA(Ala) + L-alanine + ATP = L-alanyl-tRNA(Ala) + AMP + diphosphate. Functionally, catalyzes the attachment of alanine to tRNA(Ala) in a two-step reaction: alanine is first activated by ATP to form Ala-AMP and then transferred to the acceptor end of tRNA(Ala). Also edits incorrectly charged Ser-tRNA(Ala) and Gly-tRNA(Ala) via its editing domain. This Shewanella denitrificans (strain OS217 / ATCC BAA-1090 / DSM 15013) protein is Alanine--tRNA ligase.